The chain runs to 312 residues: Porphobilinogen deaminase (312 aa).

Cys243 bears the S-(dipyrrolylmethanemethyl)cysteine mark.

Belongs to the HMBS family. As to quaternary structure, monomer. Dipyrromethane is required as a cofactor.

The enzyme catalyses 4 porphobilinogen + H2O = hydroxymethylbilane + 4 NH4(+). The protein operates within porphyrin-containing compound metabolism; protoporphyrin-IX biosynthesis; coproporphyrinogen-III from 5-aminolevulinate: step 2/4. Its function is as follows. Tetrapolymerization of the monopyrrole PBG into the hydroxymethylbilane pre-uroporphyrinogen in several discrete steps. The polypeptide is Porphobilinogen deaminase (Vibrio parahaemolyticus serotype O3:K6 (strain RIMD 2210633)).